Consider the following 68-residue polypeptide: U19-ctenitoxin-Pn1a (68 aa).

Q1 carries the post-translational modification Pyrrolidone carboxylic acid. Intrachain disulfides connect C8/C19, C13/C28, C18/C51, C38/C59, and C53/C65.

As to expression, expressed by the venom gland.

Its subcellular location is the secreted. Non-toxic to mice and insects. This Phoneutria nigriventer (Brazilian armed spider) protein is U19-ctenitoxin-Pn1a.